Consider the following 1096-residue polypeptide: cAMP/cGMP-dependent 3',5'-cAMP/cGMP phosphodiesterase B (1096 aa).

The segment at 216–248 is disordered; the sequence is SSSKMIINDSPRTQQRNGTTEQQKKQQQQQYLQ. Over residues 225–236 the composition is skewed to polar residues; the sequence is SPRTQQRNGTTE. Residues His573, His575, and Asp577 each coordinate a divalent metal cation. Residues 783-930 and 946-1070 contribute to the a nucleoside 3',5'-cyclic phosphate site; these read VFSK…DLSH and ITQH…EDNI.

The protein belongs to the metallo-beta-lactamase superfamily. cNMP phosphodiesterase family. Requires Mn(2+) as cofactor. It depends on Mg(2+) as a cofactor. Zn(2+) is required as a cofactor.

The protein localises to the cytoplasm. Its subcellular location is the cytosol. It catalyses the reaction 3',5'-cyclic AMP + H2O = AMP + H(+). The catalysed reaction is 3',5'-cyclic GMP + H2O = GMP + H(+). In terms of biological role, dual specificity cAMP and cGMP phosphodiesterase with marked preference for cyclic AMP, which is activated by cAMP and cGMP. Likely functions as a cAMP-stimulated cAMP-phosphodiesterase which may play a role in regulating the cAMP relay response. This Dictyostelium discoideum (Social amoeba) protein is cAMP/cGMP-dependent 3',5'-cAMP/cGMP phosphodiesterase B (pdeE).